The sequence spans 436 residues: 3-ketoacyl-CoA thiolase (436 aa).

The active-site Acyl-thioester intermediate is the Cys99. Catalysis depends on proton acceptor residues His392 and Cys422.

The protein belongs to the thiolase-like superfamily. Thiolase family. As to quaternary structure, heterotetramer of two alpha chains (FadJ) and two beta chains (FadI).

The protein localises to the cytoplasm. It catalyses the reaction an acyl-CoA + acetyl-CoA = a 3-oxoacyl-CoA + CoA. It functions in the pathway lipid metabolism; fatty acid beta-oxidation. Catalyzes the final step of fatty acid oxidation in which acetyl-CoA is released and the CoA ester of a fatty acid two carbons shorter is formed. The chain is 3-ketoacyl-CoA thiolase from Salmonella typhimurium (strain LT2 / SGSC1412 / ATCC 700720).